Here is a 184-residue protein sequence, read N- to C-terminus: GMP synthase [glutamine-hydrolyzing] subunit A (184 aa).

The Glutamine amidotransferase type-1 domain maps to 3–184; the sequence is HIAVIDNHGQ…VFKNFIARCQ (182 aa). The active-site Nucleophile is cysteine 75. Catalysis depends on residues histidine 163 and glutamate 165.

As to quaternary structure, heterodimer composed of a glutamine amidotransferase subunit (A) and a GMP-binding subunit (B).

The catalysed reaction is XMP + L-glutamine + ATP + H2O = GMP + L-glutamate + AMP + diphosphate + 2 H(+). The protein operates within purine metabolism; GMP biosynthesis; GMP from XMP (L-Gln route): step 1/1. Functionally, catalyzes the synthesis of GMP from XMP. This is GMP synthase [glutamine-hydrolyzing] subunit A from Haloquadratum walsbyi (strain DSM 16790 / HBSQ001).